Consider the following 862-residue polypeptide: S-layer protein EA1 (862 aa).

An N-terminal signal peptide occupies residues 1 to 29 (MAKTNSYKKVIAGTMTAAMVAGIVSPVAA). SLH domains lie at 30–93 (AGKS…NAQP), 94–151 (SFKD…KVNG), and 152–214 (ELVT…DNAQ).

It localises to the secreted. Its subcellular location is the cell wall. It is found in the S-layer. Functionally, the S-layer is a paracrystalline mono-layered assembly of proteins which coat the surface of bacteria. This chain is S-layer protein EA1 (eag), found in Bacillus anthracis.